Reading from the N-terminus, the 367-residue chain is Zorya protein ZorE (367 aa).

Its function is as follows. Component of antiviral defense system Zorya type II, composed of ZorA, ZorB and ZorE. Expression of Zorya type II in E.coli (strain MG1655) confers resistance to phages SECphi7 and T7. While most T7 infected Zorya-containing cells undergo abortive infection, a minority produce viable phage progeny. These eventually accumulate to a high multiplicity of infection, leading to culture collapse by 170 minutes after initial infection. ZorA and ZorB probably assemble in the cell inner membrane and exert their effect there. This may be a nuclease. In Escherichia coli (strain ATCC 8739 / DSM 1576 / NBRC 3972 / NCIMB 8545 / WDCM 00012 / Crooks), this protein is Zorya protein ZorE.